The sequence spans 324 residues: G patch domain-containing protein 4 (324 aa).

Disordered stretches follow at residues Met-1–Leu-30 and Leu-123–Glu-324. The G-patch domain occupies Gly-11–Ala-57. Residues Phe-14–Leu-30 are compositionally biased toward basic and acidic residues. The span at Lys-131–Ser-141 shows a compositional bias: low complexity. Residues Ser-186–Arg-215 show a composition bias toward basic and acidic residues. Residues His-244 to Arg-253 show a composition bias toward basic residues. Residues Ala-254–Glu-270 show a composition bias toward basic and acidic residues. Over residues Pro-296–Phe-309 the composition is skewed to polar residues. Positions Lys-312 to Glu-324 are enriched in basic residues.

This chain is G patch domain-containing protein 4 (gpatch4), found in Xenopus laevis (African clawed frog).